Reading from the N-terminus, the 386-residue chain is Erythronate-4-phosphate dehydrogenase (386 aa).

Residues serine 59 and threonine 81 each contribute to the substrate site. Residue aspartate 162 participates in NAD(+) binding. Arginine 239 is a catalytic residue. Aspartate 262 is an NAD(+) binding site. Glutamate 267 is a catalytic residue. Histidine 284 (proton donor) is an active-site residue. Glycine 287 contacts NAD(+). Residue tyrosine 288 coordinates substrate.

Belongs to the D-isomer specific 2-hydroxyacid dehydrogenase family. PdxB subfamily. Homodimer.

Its subcellular location is the cytoplasm. It catalyses the reaction 4-phospho-D-erythronate + NAD(+) = (R)-3-hydroxy-2-oxo-4-phosphooxybutanoate + NADH + H(+). The protein operates within cofactor biosynthesis; pyridoxine 5'-phosphate biosynthesis; pyridoxine 5'-phosphate from D-erythrose 4-phosphate: step 2/5. Its function is as follows. Catalyzes the oxidation of erythronate-4-phosphate to 3-hydroxy-2-oxo-4-phosphonooxybutanoate. This Psychrobacter cryohalolentis (strain ATCC BAA-1226 / DSM 17306 / VKM B-2378 / K5) protein is Erythronate-4-phosphate dehydrogenase.